The sequence spans 176 residues: Ferritin, spleen middle subunit (176 aa).

Positions 7–156 constitute a Ferritin-like diiron domain; that stretch reads QNYHRDCEAA…DFITNLSRMD (150 aa). Residues E24, E59, H62, E104, and Q138 each coordinate Fe cation.

It belongs to the ferritin family. In terms of assembly, in spleen, forms a homomer. The functional molecule forms a roughly spherical shell with a diameter of 12 nm and contains a central cavity into which the insoluble mineral iron core is deposited. As to expression, spleen (at protein level).

It catalyses the reaction 4 Fe(2+) + O2 + 4 H(+) = 4 Fe(3+) + 2 H2O. Functionally, stores iron in a soluble, non-toxic, readily available form. Important for iron homeostasis. Has ferroxidase activity. Iron is taken up in the ferrous form and deposited as ferric hydroxides after oxidation. This is Ferritin, spleen middle subunit from Trematomus bernacchii (Emerald rockcod).